The sequence spans 659 residues: L-type lectin-domain containing receptor kinase V.7 (659 aa).

The N-terminal stretch at 1–25 is a signal peptide; sequence MSHKVLQIVLVLLLTLFSSTHNSNG. The tract at residues 22–244 is legume-lectin like; that stretch reads NSNGNFLMEE…GALYYVMQFS (223 aa). At 26–275 the chain is on the extracellular side; the sequence is NFLMEEAAAA…PKKSYDRTRR (250 aa). Residues asparagine 45, asparagine 64, asparagine 110, and asparagine 192 are each glycosylated (N-linked (GlcNAc...) asparagine). A helical transmembrane segment spans residues 276–296; the sequence is ILAVCLTLAVFTALVASGIGF. Over 297–659 the chain is Cytoplasmic; sequence VFYVRHKKVK…LTNSFVSHGR (363 aa). The region spanning 333-595 is the Protein kinase domain; sequence FKEKQLLGKG…GLLCAHHTEL (263 aa). ATP is bound by residues 339–347 and lysine 362; that span reads LGKGGFGQV. Residue aspartate 462 is the Proton acceptor of the active site.

It in the C-terminal section; belongs to the protein kinase superfamily. Ser/Thr protein kinase family. In the N-terminal section; belongs to the leguminous lectin family.

It localises to the cell membrane. The catalysed reaction is L-seryl-[protein] + ATP = O-phospho-L-seryl-[protein] + ADP + H(+). It catalyses the reaction L-threonyl-[protein] + ATP = O-phospho-L-threonyl-[protein] + ADP + H(+). Functionally, involved in resistance response to the pathogenic oomycetes Phytophthora infestans and Phytophthora capsici and to the pathogenic bacteria Pseudomonas syringae. The sequence is that of L-type lectin-domain containing receptor kinase V.7 from Arabidopsis thaliana (Mouse-ear cress).